Consider the following 281-residue polypeptide: 2-dehydro-3-deoxyphosphooctonate aldolase (281 aa).

Belongs to the KdsA family.

It is found in the cytoplasm. The catalysed reaction is D-arabinose 5-phosphate + phosphoenolpyruvate + H2O = 3-deoxy-alpha-D-manno-2-octulosonate-8-phosphate + phosphate. Its pathway is carbohydrate biosynthesis; 3-deoxy-D-manno-octulosonate biosynthesis; 3-deoxy-D-manno-octulosonate from D-ribulose 5-phosphate: step 2/3. The protein operates within bacterial outer membrane biogenesis; lipopolysaccharide biosynthesis. The sequence is that of 2-dehydro-3-deoxyphosphooctonate aldolase from Ectopseudomonas mendocina (strain ymp) (Pseudomonas mendocina).